The sequence spans 679 residues: Penicillin-binding protein PbpB (679 aa).

Residues 1–74 (MSRAAPRRAS…STRARRTRQV (74 aa)) form a disordered region. Topologically, residues 1–90 (MSRAAPRRAS…GASFVFRHRT (90 aa)) are cytoplasmic. Over residues 42–54 (ARQAQEATKSRPA) the composition is skewed to polar residues. A helical membrane pass occupies residues 91-111 (GNAVILVLMLVAATQLFFLQV). The Extracellular portion of the chain corresponds to 112 to 679 (SHAAGLRAQA…PGPPLVLQAT (568 aa)). Catalysis depends on Ser-386, which acts as the Acyl-ester intermediate.

This sequence belongs to the transpeptidase family. In terms of assembly, interacts with Wag31. In terms of processing, cleaved by Rip1 in response to oxidative stress (H(2)O(2)), prevented by Wag31. Cleavage probably occurs near residues 102-103.

It localises to the cell membrane. It functions in the pathway cell wall biogenesis; peptidoglycan biosynthesis. Functionally, synthesis of cross-linked peptidoglycan from the lipid intermediates. The protein is Penicillin-binding protein PbpB (pbpB) of Mycobacterium tuberculosis (strain ATCC 25618 / H37Rv).